Consider the following 446-residue polypeptide: MIMAKPLSSRRAAPLAGSAPVPGDKSISHRALMLGALAVGESVVTGLLEGDDVLRTAACMRALGAEVERRDDGSWRLFGRGVGGLMEPADVLDMGNSGTGARLLMGLVATHPFTCFFTGDGSLRSRPMRRVIDPLSRMGARFVSRDGGRLPLAVTGTAQPTPITYELPVASAQVKSAIMLAGLNTAGETTVIEREATRDHTELMLRNFGATVRVEDAEGGGRAITVVGFPELTGRPVVVPADPSSAAFPVVAALLVEGSEIRLPNVGTNPLRTGLYQTLLEMGADIRFDHPRDQAGEPVADLVVRSSRLKGVDVPAERAPSMIDEYPILAVAAAFAEGTTRMRGLGELRVKESDRLAAMARGLAACGVAVEEEKDALIVHGTGRIPDGDATVTTHFDHRIAMSFLVMGMASARPVAVDDSEAIDTSFPAFVELMNGLGAKISGDNP.

Residues 1–20 (MIMAKPLSSRRAAPLAGSAP) are disordered. Lys25, Ser26, and Arg30 together coordinate 3-phosphoshikimate. Lys25 provides a ligand contact to phosphoenolpyruvate. Phosphoenolpyruvate contacts are provided by Gly98 and Arg126. The 3-phosphoshikimate site is built by Ser171, Gln173, Asp324, and Lys351. Gln173 is a phosphoenolpyruvate binding site. The active-site Proton acceptor is Asp324. Residues Arg355 and Arg399 each contribute to the phosphoenolpyruvate site.

Belongs to the EPSP synthase family. Monomer.

The protein localises to the cytoplasm. It catalyses the reaction 3-phosphoshikimate + phosphoenolpyruvate = 5-O-(1-carboxyvinyl)-3-phosphoshikimate + phosphate. The protein operates within metabolic intermediate biosynthesis; chorismate biosynthesis; chorismate from D-erythrose 4-phosphate and phosphoenolpyruvate: step 6/7. In terms of biological role, catalyzes the transfer of the enolpyruvyl moiety of phosphoenolpyruvate (PEP) to the 5-hydroxyl of shikimate-3-phosphate (S3P) to produce enolpyruvyl shikimate-3-phosphate and inorganic phosphate. The chain is 3-phosphoshikimate 1-carboxyvinyltransferase from Paramagnetospirillum magneticum (strain ATCC 700264 / AMB-1) (Magnetospirillum magneticum).